The following is a 304-amino-acid chain: Acetyl-coenzyme A carboxylase carboxyl transferase subunit beta (304 aa).

One can recognise a CoA carboxyltransferase N-terminal domain in the interval 25–294 (VWTKCDSCGQ…PSVVESKADT (270 aa)). Residues cysteine 29, cysteine 32, cysteine 48, and cysteine 51 each contribute to the Zn(2+) site. A C4-type zinc finger spans residues 29-51 (CDSCGQVLYRAELERNLEVCPKC).

It belongs to the AccD/PCCB family. Acetyl-CoA carboxylase is a heterohexamer composed of biotin carboxyl carrier protein (AccB), biotin carboxylase (AccC) and two subunits each of ACCase subunit alpha (AccA) and ACCase subunit beta (AccD). Requires Zn(2+) as cofactor.

Its subcellular location is the cytoplasm. The catalysed reaction is N(6)-carboxybiotinyl-L-lysyl-[protein] + acetyl-CoA = N(6)-biotinyl-L-lysyl-[protein] + malonyl-CoA. It participates in lipid metabolism; malonyl-CoA biosynthesis; malonyl-CoA from acetyl-CoA: step 1/1. Its function is as follows. Component of the acetyl coenzyme A carboxylase (ACC) complex. Biotin carboxylase (BC) catalyzes the carboxylation of biotin on its carrier protein (BCCP) and then the CO(2) group is transferred by the transcarboxylase to acetyl-CoA to form malonyl-CoA. The polypeptide is Acetyl-coenzyme A carboxylase carboxyl transferase subunit beta (Yersinia pseudotuberculosis serotype O:1b (strain IP 31758)).